Here is a 561-residue protein sequence, read N- to C-terminus: Zinc finger protein 37A (561 aa).

The 72-residue stretch at 8-79 (VSFRDVTVGF…EEKFPSQSHL (72 aa)) folds into the KRAB domain. A C2H2-type 1; degenerate zinc finger spans residues 146-168 (FEYNECGKAFPENSLFLVHKRGY). A C2H2-type 2; degenerate zinc finger spans residues 243–265 (IEYNECGTFFSEKLVLHLQQRTH). 10 C2H2-type zinc fingers span residues 271 to 293 (YECHECGKTFTQKSAHTRHQRTH), 299 to 321 (YECHECGKTFYKNSDLIKHQRIH), 327 to 349 (YGCHECGKSFSEKSTLTQHQRTH), 355 to 377 (YECHECGKTFSFKSVLTVHQKTH), 383 to 405 (YECYACGKAFLRKSDLIKHQRIH), 411 to 433 (YECNECGKSFSEKSTLTKHLRTH), 439 to 461 (YECIQCGKFFCYYSGFTEHLRRH), 467 to 489 (FGCNECGKTFRQKSALIVHQRTH), 495 to 517 (YGCNQCGKSFCVKSKLIAHHRTH), and 523 to 545 (YECNVCGKSFYVKSKLTVHQRIH).

It belongs to the krueppel C2H2-type zinc-finger protein family.

It is found in the nucleus. Its function is as follows. May be involved in transcriptional regulation. The sequence is that of Zinc finger protein 37A (ZNF37A) from Homo sapiens (Human).